The chain runs to 406 residues: Succinyl-diaminopimelate desuccinylase (406 aa).

Zn(2+) is bound at residue His95. Asp97 is an active-site residue. Asp128 serves as a coordination point for Zn(2+). Glu162 functions as the Proton acceptor in the catalytic mechanism. Glu163, Glu191, and His377 together coordinate Zn(2+).

The protein belongs to the peptidase M20A family. DapE subfamily. In terms of assembly, homodimer. It depends on Zn(2+) as a cofactor. The cofactor is Co(2+).

It catalyses the reaction N-succinyl-(2S,6S)-2,6-diaminopimelate + H2O = (2S,6S)-2,6-diaminopimelate + succinate. Its pathway is amino-acid biosynthesis; L-lysine biosynthesis via DAP pathway; LL-2,6-diaminopimelate from (S)-tetrahydrodipicolinate (succinylase route): step 3/3. Catalyzes the hydrolysis of N-succinyl-L,L-diaminopimelic acid (SDAP), forming succinate and LL-2,6-diaminopimelate (DAP), an intermediate involved in the bacterial biosynthesis of lysine and meso-diaminopimelic acid, an essential component of bacterial cell walls. The chain is Succinyl-diaminopimelate desuccinylase from Polaromonas naphthalenivorans (strain CJ2).